Reading from the N-terminus, the 259-residue chain is Type III pantothenate kinase (259 aa).

6–13 (DIGNTNIT) provides a ligand contact to ATP. 113–116 (GADR) lines the substrate pocket. Catalysis depends on Asp-115, which acts as the Proton acceptor. Residue Asp-135 participates in K(+) binding. Residue Thr-138 coordinates ATP. A substrate-binding site is contributed by Thr-190.

It belongs to the type III pantothenate kinase family. As to quaternary structure, homodimer. NH4(+) serves as cofactor. The cofactor is K(+).

It is found in the cytoplasm. The catalysed reaction is (R)-pantothenate + ATP = (R)-4'-phosphopantothenate + ADP + H(+). It participates in cofactor biosynthesis; coenzyme A biosynthesis; CoA from (R)-pantothenate: step 1/5. Functionally, catalyzes the phosphorylation of pantothenate (Pan), the first step in CoA biosynthesis. This Endomicrobium trichonymphae protein is Type III pantothenate kinase.